A 196-amino-acid polypeptide reads, in one-letter code: Signal peptidase complex catalytic subunit SEC11 (196 aa).

At 1–14 (MLSSLSPYMANPRQ) the chain is on the cytoplasmic side. A helical; Signal-anchor for type II membrane protein transmembrane segment spans residues 15–33 (TFTQVLNFALVLSTAFMLW). Topologically, residues 34 to 196 (KGLSVYTNSA…MGLMVILQRE (163 aa)) are lumenal. Catalysis depends on charge relay system residues serine 53 and histidine 92. Positions 101–133 (VPGKDKTKKGGKQGVEASPSSLESQKLLTKGDN) are disordered. Residues 118–133 (SPSSLESQKLLTKGDN) show a composition bias toward polar residues. The N-linked (GlcNAc...) asparagine glycan is linked to asparagine 134. Aspartate 138 (charge relay system) is an active-site residue. A C-terminal short (CTS) helix region spans residues 182–193 (VLLGFMGLMVIL).

The protein belongs to the peptidase S26B family. Component of the signal peptidase complex (SPC) composed of a catalytic subunit SEC11 and three accessory subunits SPC1, SPC2 and SPC3. The complex induces a local thinning of the ER membrane which is used to measure the length of the signal peptide (SP) h-region of protein substrates. This ensures the selectivity of the complex towards h-regions shorter than 18-20 amino acids. SPC associates with the translocon complex.

It localises to the endoplasmic reticulum membrane. The catalysed reaction is Cleavage of hydrophobic, N-terminal signal or leader sequences from secreted and periplasmic proteins.. Its function is as follows. Catalytic component of the signal peptidase complex (SPC) which catalyzes the cleavage of N-terminal signal sequences from nascent proteins as they are translocated into the lumen of the endoplasmic reticulum. Specifically cleaves N-terminal signal peptides that contain a hydrophobic alpha-helix (h-region) shorter than 18-20 amino acids. This Ajellomyces dermatitidis (strain ER-3 / ATCC MYA-2586) (Blastomyces dermatitidis) protein is Signal peptidase complex catalytic subunit SEC11 (SEC11).